The primary structure comprises 172 residues: uncharacterized protein (172 aa).

This is an uncharacterized protein from Aquifex aeolicus (strain VF5).